We begin with the raw amino-acid sequence, 204 residues long: Recombination protein RecR (204 aa).

Residues 58-75 (CSVCQNITDVGVDPCALC) form a C4-type zinc finger. The 99-residue stretch at 83–181 (SVICVVESPV…HVTKIARGIP (99 aa)) folds into the Toprim domain.

It belongs to the RecR family.

In terms of biological role, may play a role in DNA repair. It seems to be involved in an RecBC-independent recombinational process of DNA repair. It may act with RecF and RecO. This is Recombination protein RecR from Pelodictyon phaeoclathratiforme (strain DSM 5477 / BU-1).